Here is a 303-residue protein sequence, read N- to C-terminus: Aspartate carbamoyltransferase catalytic subunit (303 aa).

Residues Arg-51 and Thr-52 each coordinate carbamoyl phosphate. Lys-80 serves as a coordination point for L-aspartate. Residues Arg-101, His-129, and Gln-132 each coordinate carbamoyl phosphate. 2 residues coordinate L-aspartate: Arg-162 and Arg-221. 2 residues coordinate carbamoyl phosphate: Leu-260 and Pro-261.

It belongs to the aspartate/ornithine carbamoyltransferase superfamily. ATCase family. As to quaternary structure, heterooligomer of catalytic and regulatory chains.

It catalyses the reaction carbamoyl phosphate + L-aspartate = N-carbamoyl-L-aspartate + phosphate + H(+). The protein operates within pyrimidine metabolism; UMP biosynthesis via de novo pathway; (S)-dihydroorotate from bicarbonate: step 2/3. Catalyzes the condensation of carbamoyl phosphate and aspartate to form carbamoyl aspartate and inorganic phosphate, the committed step in the de novo pyrimidine nucleotide biosynthesis pathway. This chain is Aspartate carbamoyltransferase catalytic subunit, found in Saccharolobus islandicus (strain M.14.25 / Kamchatka #1) (Sulfolobus islandicus).